A 666-amino-acid chain; its full sequence is NAD(P)H-quinone oxidoreductase subunit 5, organellar chromatophore 1 (666 aa).

Helical transmembrane passes span 8-28 (LVWLIPILPFIGAFLVGFGLI), 41-61 (AALLLISSVGISAVLSFMVLA), 90-110 (VDPIGATMLALVSTVAILVMV), 121-141 (SYVRFFTYLGLFTSSMLALIL), 145-165 (LLEIYVFWELVGMCSYLLIGF), 190-210 (FLLGILGLFWATNSFDFQIVA), 220-240 (GSIPHWAAIALCLLLFMGPMA), 259-279 (TPISALIHAATMVAAGVFLVA), 293-313 (IIVAVIGTITCFLGASIALIQ), 328-348 (LGYMMLAMGCGAPVAGMFHLI), 396-416 (GITFFIGCVAISGIPPLAGFW), 428-448 (SYPLLWGVGLFTAGLTAFYMF), 497-517 (TLPLVILSVPSVLIGFLGSPW), 542-562 (FLPLAIASVMISTCGIVIATI), and 643-663 (GRPQFYALIIFGGVISLIVIF).

It belongs to the complex I subunit 5 family. As to quaternary structure, NDH is composed of at least 16 different subunits, 5 of which are encoded in the nucleus.

Its subcellular location is the plastid. It is found in the organellar chromatophore thylakoid membrane. It carries out the reaction a plastoquinone + NADH + (n+1) H(+)(in) = a plastoquinol + NAD(+) + n H(+)(out). The catalysed reaction is a plastoquinone + NADPH + (n+1) H(+)(in) = a plastoquinol + NADP(+) + n H(+)(out). In terms of biological role, NDH shuttles electrons from NAD(P)H:plastoquinone, via FMN and iron-sulfur (Fe-S) centers, to quinones in the photosynthetic chain and possibly in a chloroplast respiratory chain. The immediate electron acceptor for the enzyme in this species is believed to be plastoquinone. Couples the redox reaction to proton translocation, and thus conserves the redox energy in a proton gradient. This is NAD(P)H-quinone oxidoreductase subunit 5, organellar chromatophore 1 (ndhF1) from Paulinella chromatophora.